Here is a 437-residue protein sequence, read N- to C-terminus: UDP-N-acetylmuramate--L-alanine ligase (437 aa).

108–114 serves as a coordination point for ATP; it reads GAHGKTS.

The protein belongs to the MurCDEF family.

It is found in the cytoplasm. It carries out the reaction UDP-N-acetyl-alpha-D-muramate + L-alanine + ATP = UDP-N-acetyl-alpha-D-muramoyl-L-alanine + ADP + phosphate + H(+). It functions in the pathway cell wall biogenesis; peptidoglycan biosynthesis. Functionally, cell wall formation. This is UDP-N-acetylmuramate--L-alanine ligase from Staphylococcus haemolyticus (strain JCSC1435).